A 632-amino-acid chain; its full sequence is 1-deoxy-D-xylulose-5-phosphate synthase (632 aa).

Residues H72 and G113–A115 each bind thiamine diphosphate. D144 contributes to the Mg(2+) binding site. Thiamine diphosphate is bound by residues G145–A146, N174, Y285, and E368. Position 174 (N174) interacts with Mg(2+).

This sequence belongs to the transketolase family. DXPS subfamily. In terms of assembly, homodimer. Requires Mg(2+) as cofactor. Thiamine diphosphate serves as cofactor.

It carries out the reaction D-glyceraldehyde 3-phosphate + pyruvate + H(+) = 1-deoxy-D-xylulose 5-phosphate + CO2. Its pathway is metabolic intermediate biosynthesis; 1-deoxy-D-xylulose 5-phosphate biosynthesis; 1-deoxy-D-xylulose 5-phosphate from D-glyceraldehyde 3-phosphate and pyruvate: step 1/1. Catalyzes the acyloin condensation reaction between C atoms 2 and 3 of pyruvate and glyceraldehyde 3-phosphate to yield 1-deoxy-D-xylulose-5-phosphate (DXP). This chain is 1-deoxy-D-xylulose-5-phosphate synthase, found in Cyanothece sp. (strain PCC 7425 / ATCC 29141).